The following is a 248-amino-acid chain: Urease accessory protein UreG 1 (248 aa).

A compositionally biased stretch (basic and acidic residues) spans 1–14; it reads MLPEHHDHGHEHGG. The disordered stretch occupies residues 1-36; sequence MLPEHHDHGHEHGGNGHGHGHRHQVNFDPTAAEPDP. A GTP-binding site is contributed by 53 to 60; the sequence is GPVGSGKT.

Belongs to the SIMIBI class G3E GTPase family. UreG subfamily. As to quaternary structure, homodimer. UreD, UreF and UreG form a complex that acts as a GTP-hydrolysis-dependent molecular chaperone, activating the urease apoprotein by helping to assemble the nickel containing metallocenter of UreC. The UreE protein probably delivers the nickel.

The protein resides in the cytoplasm. In terms of biological role, facilitates the functional incorporation of the urease nickel metallocenter. This process requires GTP hydrolysis, probably effectuated by UreG. In Saccharopolyspora erythraea (strain ATCC 11635 / DSM 40517 / JCM 4748 / NBRC 13426 / NCIMB 8594 / NRRL 2338), this protein is Urease accessory protein UreG 1.